The chain runs to 259 residues: Proteasome subunit alpha type-7 (259 aa).

Belongs to the peptidase T1A family. As to quaternary structure, the 26S proteasome consists of a 20S proteasome core and two 19S regulatory subunits. The 20S proteasome core is composed of 28 subunits that are arranged in four stacked rings, resulting in a barrel-shaped structure. The two end rings are each formed by seven alpha subunits, and the two central rings are each formed by seven beta subunits. The catalytic chamber with the active sites is on the inside of the barrel.

The protein localises to the cytoplasm. It localises to the nucleus. Its function is as follows. The proteasome is a multicatalytic proteinase complex which is characterized by its ability to cleave peptides with Arg, Phe, Tyr, Leu, and Glu adjacent to the leaving group at neutral or slightly basic pH. The proteasome has an ATP-dependent proteolytic activity. The polypeptide is Proteasome subunit alpha type-7 (PAD1) (Solanum lycopersicum (Tomato)).